The chain runs to 359 residues: Molybdenum import ATP-binding protein ModC (359 aa).

Residues 1–236 (MNTEIKARFR…IDLPAAFADD (236 aa)) enclose the ABC transporter domain. 34-41 (GHSGSGKT) is a binding site for ATP. The Mop domain occupies 294 to 359 (QSSILNCVSA…AQIKAVALLA (66 aa)).

It belongs to the ABC transporter superfamily. Molybdate importer (TC 3.A.1.8) family. As to quaternary structure, the complex is composed of two ATP-binding proteins (ModC), two transmembrane proteins (ModB) and a solute-binding protein (ModA).

The protein localises to the cell inner membrane. It catalyses the reaction molybdate(out) + ATP + H2O = molybdate(in) + ADP + phosphate + H(+). Its function is as follows. Part of the ABC transporter complex ModABC involved in molybdenum import. Responsible for energy coupling to the transport system. The chain is Molybdenum import ATP-binding protein ModC from Dechloromonas aromatica (strain RCB).